The chain runs to 90 residues: High mobility group nucleosome-binding domain-containing protein 4 (90 aa).

The interval 1 to 90 is disordered; the sequence is MPKRKAKGDA…QKAEGTGDAK (90 aa). The span at 7 to 23 shows a compositional bias: basic and acidic residues; the sequence is KGDAKGDKGKVKDEPQR. Residue S29 is modified to ADP-ribosylserine. The span at 37-64 shows a compositional bias: basic and acidic residues; the sequence is PEPRPKKAPAKKGEKLAKGRKGKAEVSK. Polar residues predominate over residues 65–83; the sequence is DGNNPAKNRDASTVQSQKA. At S80 the chain carries Phosphoserine. An N6-acetyllysine modification is found at K82.

The protein belongs to the HMGN family.

Its subcellular location is the nucleus. This is High mobility group nucleosome-binding domain-containing protein 4 (HMGN4) from Bos taurus (Bovine).